The sequence spans 195 residues: Inner membrane protein YohC (195 aa).

Over 1–32 the chain is Cytoplasmic; it reads MSHVWGLFSHPDREMQVINRENETISHHYTHH. The helical transmembrane segment at 33-55 threads the bilayer; that stretch reads VLLMAAIPVICAFIGTTQIGWNF. Residues 56–64 are Periplasmic-facing; that stretch reads GDGTILKLS. Residues 65–87 traverse the membrane as a helical segment; sequence WFTGLALAVLFYGVMLAGVAVMG. Residues 88-107 are Cytoplasmic-facing; sequence RVIWWMARNYPQRPSLAHCM. A helical membrane pass occupies residues 108 to 130; that stretch reads VFAGYVATPLFLSGLVALYPLVW. Residues 131–134 are Periplasmic-facing; the sequence is LCAL. A helical membrane pass occupies residues 135–157; the sequence is VGTVALFYTGYLLYLGIPSFLNI. The Cytoplasmic segment spans residues 158–169; it reads NKEEGLSFSSST. The helical transmembrane segment at 170–192 threads the bilayer; it reads LAIGVLVLEVLLALTVILWGYGY. At 193–195 the chain is on the periplasmic side; that stretch reads RLF.

The protein localises to the cell inner membrane. The sequence is that of Inner membrane protein YohC (yohC) from Escherichia coli O6:H1 (strain CFT073 / ATCC 700928 / UPEC).